Consider the following 532-residue polypeptide: Fatty-acid amide hydrolase 2-A (532 aa).

A helical transmembrane segment spans residues 9 to 29 (FLGRLLRAVVWILFAAFKLFA). Active-site charge relay system residues include Lys-129 and Ser-204. Ser-228 acts as the Acyl-ester intermediate in catalysis.

It belongs to the amidase family.

The protein localises to the membrane. It carries out the reaction N-(5Z,8Z,11Z,14Z-eicosatetraenoyl)-ethanolamine + H2O = ethanolamine + (5Z,8Z,11Z,14Z)-eicosatetraenoate. The catalysed reaction is (9Z)-octadecenamide + H2O = (9Z)-octadecenoate + NH4(+). This is Fatty-acid amide hydrolase 2-A (faah2a) from Danio rerio (Zebrafish).